We begin with the raw amino-acid sequence, 270 residues long: Tryptophan synthase alpha chain (270 aa).

Residues glutamate 49 and aspartate 60 each act as proton acceptor in the active site.

It belongs to the TrpA family. As to quaternary structure, tetramer of two alpha and two beta chains.

It carries out the reaction (1S,2R)-1-C-(indol-3-yl)glycerol 3-phosphate + L-serine = D-glyceraldehyde 3-phosphate + L-tryptophan + H2O. The protein operates within amino-acid biosynthesis; L-tryptophan biosynthesis; L-tryptophan from chorismate: step 5/5. In terms of biological role, the alpha subunit is responsible for the aldol cleavage of indoleglycerol phosphate to indole and glyceraldehyde 3-phosphate. The polypeptide is Tryptophan synthase alpha chain (Pseudomonas syringae pv. tomato (strain ATCC BAA-871 / DC3000)).